The primary structure comprises 672 residues: Bifunctional polymyxin resistance protein ArnA (672 aa).

The segment at 1–310 (MKAIVFAYHD…EMGMVPQAKL (310 aa)) is formyltransferase ArnAFT. H104 serves as the catalytic Proton donor; for formyltransferase activity. Residues R114 and 136–140 (VSRAD) contribute to the (6R)-10-formyltetrahydrofolate site. A dehydrogenase ArnADH region spans residues 320-672 (RRTRVLILGV…HADNVTDTQG (353 aa)). NAD(+)-binding positions include D353 and 374–375 (DI). UDP-alpha-D-glucuronate-binding positions include A399, Y404, and 438 to 439 (TS). E440 acts as the Proton acceptor; for decarboxylase activity in catalysis. Residues R466, N498, 532–541 (KLVDGGAQKR), and Y619 each bind UDP-alpha-D-glucuronate. The active-site Proton donor; for decarboxylase activity is the R625.

It in the N-terminal section; belongs to the Fmt family. UDP-L-Ara4N formyltransferase subfamily. This sequence in the C-terminal section; belongs to the NAD(P)-dependent epimerase/dehydratase family. UDP-glucuronic acid decarboxylase subfamily. Homohexamer, formed by a dimer of trimers.

It carries out the reaction UDP-alpha-D-glucuronate + NAD(+) = UDP-beta-L-threo-pentopyranos-4-ulose + CO2 + NADH. The enzyme catalyses UDP-4-amino-4-deoxy-beta-L-arabinose + (6R)-10-formyltetrahydrofolate = UDP-4-deoxy-4-formamido-beta-L-arabinose + (6S)-5,6,7,8-tetrahydrofolate + H(+). The protein operates within nucleotide-sugar biosynthesis; UDP-4-deoxy-4-formamido-beta-L-arabinose biosynthesis; UDP-4-deoxy-4-formamido-beta-L-arabinose from UDP-alpha-D-glucuronate: step 1/3. It functions in the pathway nucleotide-sugar biosynthesis; UDP-4-deoxy-4-formamido-beta-L-arabinose biosynthesis; UDP-4-deoxy-4-formamido-beta-L-arabinose from UDP-alpha-D-glucuronate: step 3/3. Its pathway is bacterial outer membrane biogenesis; lipopolysaccharide biosynthesis. In terms of biological role, bifunctional enzyme that catalyzes the oxidative decarboxylation of UDP-glucuronic acid (UDP-GlcUA) to UDP-4-keto-arabinose (UDP-Ara4O) and the addition of a formyl group to UDP-4-amino-4-deoxy-L-arabinose (UDP-L-Ara4N) to form UDP-L-4-formamido-arabinose (UDP-L-Ara4FN). The modified arabinose is attached to lipid A and is required for resistance to polymyxin and cationic antimicrobial peptides. This Pectobacterium carotovorum subsp. carotovorum (strain PC1) protein is Bifunctional polymyxin resistance protein ArnA.